The chain runs to 355 residues: Heterogeneous nuclear ribonucleoprotein D0 (355 aa).

The interval 1 to 91 (MSEEQFGGDG…SSPRHTEAAA (91 aa)) is disordered. Ser2 carries the N-acetylserine modification. Residues 11-43 (AAAAATAAVGGSAGEQEGAMVAAAAQGPAAAAG) show a composition bias toward low complexity. The span at 44–58 (SGSGGGGSAAGGTEG) shows a compositional bias: gly residues. The segment covering 64–73 (EGAKIDASKN) has biased composition (basic and acidic residues). Ser71 is subject to Phosphoserine. Lys72 participates in a covalent cross-link: Glycyl lysine isopeptide (Lys-Gly) (interchain with G-Cter in SUMO2). Ser80, Ser82, and Ser83 each carry phosphoserine. RRM domains follow at residues 97–179 (WKMF…KTKE) and 182–261 (KKIF…MSKE). Lys119 is modified (N6-methyllysine). At Thr127 the chain carries Phosphothreonine. Residue Lys129 forms a Glycyl lysine isopeptide (Lys-Gly) (interchain with G-Cter in SUMO2) linkage. An N6-acetyllysine modification is found at Lys165. Ser190 is modified (phosphoserine). Thr193 carries the phosphothreonine modification. A Glycyl lysine isopeptide (Lys-Gly) (interchain with G-Cter in SUMO2) cross-link involves residue Lys197. Residues Lys243 and Lys251 each carry the N6-acetyllysine modification. 2 positions are modified to omega-N-methylarginine: Glu261 and Tyr263. The residue at position 271 (Ser271) is a Phosphoserine. 4 positions are modified to omega-N-methylarginine: Arg272, Arg278, Arg280, and Arg282. Arg345 is subject to Asymmetric dimethylarginine; alternate. Arg345 bears the Dimethylated arginine; alternate mark. Arg345 is subject to Omega-N-methylarginine; alternate.

Identified in a IGF2BP1-dependent mRNP granule complex containing untranslated mRNAs. Part of a complex associated with the FOS mCRD domain and consisting of PABPC1, PAIP1, CSDE1/UNR and SYNCRIP. Interacts with IGF2BP2. Interacts with GTPBP1. Interacts with EIF4G1; the interaction requires RNA. Interacts with EIF3B and RPS3. Methylated by PRMT1, in an insulin-dependent manner. The PRMT1-mediated methylation regulates its phosphorylation. Post-translationally, arg-345 is dimethylated, probably to asymmetric dimethylarginine.

It localises to the nucleus. Its subcellular location is the cytoplasm. Its function is as follows. Binds with high affinity to RNA molecules that contain AU-rich elements (AREs) found within the 3'-UTR of many proto-oncogenes and cytokine mRNAs. Also binds to double- and single-stranded DNA sequences in a specific manner and functions a transcription factor. Each of the RNA-binding domains specifically can bind solely to a single-stranded non-monotonous 5'-UUAG-3' sequence and also weaker to the single-stranded 5'-TTAGGG-3' telomeric DNA repeat. Binds RNA oligonucleotides with 5'-UUAGGG-3' repeats more tightly than the telomeric single-stranded DNA 5'-TTAGGG-3' repeats. Binding of RRM1 to DNA inhibits the formation of DNA quadruplex structure which may play a role in telomere elongation. May be involved in translationally coupled mRNA turnover. Implicated with other RNA-binding proteins in the cytoplasmic deadenylation/translational and decay interplay of the FOS mRNA mediated by the major coding-region determinant of instability (mCRD) domain. May play a role in the regulation of the rhythmic expression of circadian clock core genes. Directly binds to the 3'UTR of CRY1 mRNA and induces CRY1 rhythmic translation. May also be involved in the regulation of PER2 translation. The sequence is that of Heterogeneous nuclear ribonucleoprotein D0 (Hnrnpd) from Mus musculus (Mouse).